Here is a 449-residue protein sequence, read N- to C-terminus: Bifunctional protein GlmU (449 aa).

A pyrophosphorylase region spans residues 1–226; sequence MVAVAILAAG…FQEISGINDR (226 aa). UDP-N-acetyl-alpha-D-glucosamine-binding positions include 7 to 10, Lys21, Gln73, and 78 to 79; these read LAAG and GT. Asp103 provides a ligand contact to Mg(2+). Residues Gly140, Glu155, Asn170, and Asn224 each coordinate UDP-N-acetyl-alpha-D-glucosamine. Asn224 is a binding site for Mg(2+). The tract at residues 227-247 is linker; it reads FQLSAAYEILQDRIKEKWMKA. The interval 248-449 is N-acetyltransferase; that stretch reads GVMIHQPDTV…KEIKGWRLQS (202 aa). UDP-N-acetyl-alpha-D-glucosamine is bound by residues Arg329 and Lys347. His359 serves as the catalytic Proton acceptor. UDP-N-acetyl-alpha-D-glucosamine contacts are provided by Tyr362 and Asn373. Residues Ala376, 382-383, Ala419, and Arg436 contribute to the acetyl-CoA site; that span reads NY.

It in the N-terminal section; belongs to the N-acetylglucosamine-1-phosphate uridyltransferase family. In the C-terminal section; belongs to the transferase hexapeptide repeat family. Homotrimer. It depends on Mg(2+) as a cofactor.

Its subcellular location is the cytoplasm. It carries out the reaction alpha-D-glucosamine 1-phosphate + acetyl-CoA = N-acetyl-alpha-D-glucosamine 1-phosphate + CoA + H(+). The catalysed reaction is N-acetyl-alpha-D-glucosamine 1-phosphate + UTP + H(+) = UDP-N-acetyl-alpha-D-glucosamine + diphosphate. The protein operates within nucleotide-sugar biosynthesis; UDP-N-acetyl-alpha-D-glucosamine biosynthesis; N-acetyl-alpha-D-glucosamine 1-phosphate from alpha-D-glucosamine 6-phosphate (route II): step 2/2. It participates in nucleotide-sugar biosynthesis; UDP-N-acetyl-alpha-D-glucosamine biosynthesis; UDP-N-acetyl-alpha-D-glucosamine from N-acetyl-alpha-D-glucosamine 1-phosphate: step 1/1. It functions in the pathway bacterial outer membrane biogenesis; LPS lipid A biosynthesis. Its function is as follows. Catalyzes the last two sequential reactions in the de novo biosynthetic pathway for UDP-N-acetylglucosamine (UDP-GlcNAc). The C-terminal domain catalyzes the transfer of acetyl group from acetyl coenzyme A to glucosamine-1-phosphate (GlcN-1-P) to produce N-acetylglucosamine-1-phosphate (GlcNAc-1-P), which is converted into UDP-GlcNAc by the transfer of uridine 5-monophosphate (from uridine 5-triphosphate), a reaction catalyzed by the N-terminal domain. The chain is Bifunctional protein GlmU from Picosynechococcus sp. (strain ATCC 27264 / PCC 7002 / PR-6) (Agmenellum quadruplicatum).